Reading from the N-terminus, the 460-residue chain is MEFSEWYSDILEKAGIYDLRYPIKGCGVYLPYGFKIRRYSFEILRKLLDETGHDETLFPMLIPENLLAKEGEHIKGFEDEVFWVTHGGKTPLEVKLALRPTSETTMYYMMKQWIKVHTDLPLKLYQVVNTFRYETKHTRPLIRLREIMSFKEAHTAHATKEDCDAQIKEALNLYGEFFDEICVPYIISKRPEWDKFPGADYTMAFDTIYPDGKTMQIGTVHNLGQNFAKTFELEFETPDGEKDFVYQTCYGISDRAIASLISVHGDEKGLVIPVDVAPIQIVLIPLLFKGKEEIVMEKIKELNSTLKSEFRVHLDDRDIRPGRKYNDWEIKGVPLRIELGPRDIENGQALIVRRDTGEKITVEYSNILEEVEKIVSMYKENLKIKADEKIKNFLTVVDFESDVNALSEKVKAALLENKGIILIPFDESVYNEEFEELIDASVLGQTTYEGKDYISVARTY.

The protein belongs to the class-II aminoacyl-tRNA synthetase family. ProS type 3 subfamily. In terms of assembly, homodimer.

It is found in the cytoplasm. The enzyme catalyses tRNA(Pro) + L-proline + ATP = L-prolyl-tRNA(Pro) + AMP + diphosphate. In terms of biological role, catalyzes the attachment of proline to tRNA(Pro) in a two-step reaction: proline is first activated by ATP to form Pro-AMP and then transferred to the acceptor end of tRNA(Pro). The sequence is that of Proline--tRNA ligase from Methanococcus maripaludis (strain C7 / ATCC BAA-1331).